Here is a 637-residue protein sequence, read N- to C-terminus: Chaperone protein HtpG (637 aa).

The interval 1-334 is a; substrate-binding; that stretch reads MQDVVNSEKL…SSDLPLNISR (334 aa). Residues 335–558 are b; the sequence is ETLQNNKVIE…DGSMDIRMER (224 aa). The segment at 559 to 637 is c; sequence FLREQKQLNY…MNNVLVKVYQ (79 aa).

This sequence belongs to the heat shock protein 90 family. As to quaternary structure, homodimer.

It is found in the cytoplasm. Functionally, molecular chaperone. Has ATPase activity. This Ehrlichia canis (strain Jake) protein is Chaperone protein HtpG.